The primary structure comprises 63 residues: Large ribosomal subunit protein uL30 (63 aa).

The protein belongs to the universal ribosomal protein uL30 family. Part of the 50S ribosomal subunit.

The polypeptide is Large ribosomal subunit protein uL30 (Natranaerobius thermophilus (strain ATCC BAA-1301 / DSM 18059 / JW/NM-WN-LF)).